Reading from the N-terminus, the 97-residue chain is Peptide YY (97 aa).

The first 28 residues, 1 to 28 (MVFVRRPWPALTTVLLALLVCLGALVDA), serve as a signal peptide directing secretion. S41 carries the post-translational modification Phosphoserine. Residue Y64 is modified to Tyrosine amide. Residues 65-97 (GKRDGPDTLLSKTFFPDGEDRPVRSRSEGPDLW) form a disordered region. Positions 68–97 (DGPDTLLSKTFFPDGEDRPVRSRSEGPDLW) are excised as a propeptide. Over residues 82–97 (GEDRPVRSRSEGPDLW) the composition is skewed to basic and acidic residues.

This sequence belongs to the NPY family. Post-translationally, the peptide YY form is cleaved at Pro-30 by the prolyl endopeptidase FAP (seprase) activity (in vitro) to generate peptide YY(3-36).

Its subcellular location is the secreted. Functionally, this gut peptide inhibits exocrine pancreatic secretion, has a vasoconstrictory action and inhibitis jejunal and colonic mobility. This Homo sapiens (Human) protein is Peptide YY (PYY).